We begin with the raw amino-acid sequence, 562 residues long: Probable sesquiterpene synthase (562 aa).

Mg(2+)-binding residues include D315, D319, and E467. A DDXXD motif motif is present at residues 315 to 319; it reads DDIYD.

Belongs to the terpene synthase family. Tpsa subfamily. Mg(2+) serves as cofactor. The cofactor is Mn(2+).

In terms of biological role, sesquiterpene synthase. The polypeptide is Probable sesquiterpene synthase (SesquiTPS) (Santalum spicatum (Australian sandalwood)).